A 230-amino-acid polypeptide reads, in one-letter code: Biosynthetic peptidoglycan transglycosylase (230 aa).

A helical membrane pass occupies residues 10–30; sequence IFLFFIAVIFVYQFWIFSQIV.

It belongs to the glycosyltransferase 51 family.

It localises to the cell inner membrane. The enzyme catalyses [GlcNAc-(1-&gt;4)-Mur2Ac(oyl-L-Ala-gamma-D-Glu-L-Lys-D-Ala-D-Ala)](n)-di-trans,octa-cis-undecaprenyl diphosphate + beta-D-GlcNAc-(1-&gt;4)-Mur2Ac(oyl-L-Ala-gamma-D-Glu-L-Lys-D-Ala-D-Ala)-di-trans,octa-cis-undecaprenyl diphosphate = [GlcNAc-(1-&gt;4)-Mur2Ac(oyl-L-Ala-gamma-D-Glu-L-Lys-D-Ala-D-Ala)](n+1)-di-trans,octa-cis-undecaprenyl diphosphate + di-trans,octa-cis-undecaprenyl diphosphate + H(+). It participates in cell wall biogenesis; peptidoglycan biosynthesis. Peptidoglycan polymerase that catalyzes glycan chain elongation from lipid-linked precursors. This Nitrosospira multiformis (strain ATCC 25196 / NCIMB 11849 / C 71) protein is Biosynthetic peptidoglycan transglycosylase.